The chain runs to 417 residues: Metal-binding activator 1 (417 aa).

Positions 1–40 (MIIFNGNKYACASCIRGHRSSTCRHSHRMLIKVRTRGRPS) form a DNA-binding region, copper-fist. The Zn(2+) site is built by Cys-11, Cys-14, Cys-23, and His-25. Disordered stretches follow at residues 128 to 198 (FLRK…IFTP) and 216 to 242 (YNSS…AAPH). Position 143 is a phosphoserine (Ser-143). The span at 153 to 178 (SEKKERSRLQQEPIRHFSNCCKKDKS) shows a compositional bias: basic and acidic residues. Polar residues-rich tracts occupy residues 179–190 (QNPASNGKTNKA) and 228–238 (ETLTPQSTTTI). Tandem repeats lie at residues 264-279 (CSCE…CLIH) and 322-337 (CICP…CFSH). The segment at 264-337 (CSCEDESCPC…NCTCDGCFSH (74 aa)) is 2 X 16 AA repeat of C-X-C-X(4)-C-X-C-X-X-C-X-X-H.

It localises to the nucleus. Functionally, regulatory protein involved in Cu/Fe utilization and stress resistance. Involved in basal level transcription of FRE1 and H(2)O(2)-induced transcription of CTT1. Regulates the transcription of CTR1 and CTR3 via the copper ion responsive elements in their promoters. Required for degradation of CTR1. The chain is Metal-binding activator 1 (MAC1) from Saccharomyces cerevisiae (strain ATCC 204508 / S288c) (Baker's yeast).